The chain runs to 693 residues: Elongation factor G (693 aa).

Positions 8-284 (HMVRNIGIAA…AVIDYLPAPD (277 aa)) constitute a tr-type G domain. GTP contacts are provided by residues 17–24 (AHIDAGKT), 81–85 (DTPGH), and 135–138 (NKMD).

Belongs to the TRAFAC class translation factor GTPase superfamily. Classic translation factor GTPase family. EF-G/EF-2 subfamily.

Its subcellular location is the cytoplasm. Its function is as follows. Catalyzes the GTP-dependent ribosomal translocation step during translation elongation. During this step, the ribosome changes from the pre-translocational (PRE) to the post-translocational (POST) state as the newly formed A-site-bound peptidyl-tRNA and P-site-bound deacylated tRNA move to the P and E sites, respectively. Catalyzes the coordinated movement of the two tRNA molecules, the mRNA and conformational changes in the ribosome. This chain is Elongation factor G, found in Nautilia profundicola (strain ATCC BAA-1463 / DSM 18972 / AmH).